A 394-amino-acid polypeptide reads, in one-letter code: Mitogen-activated protein kinase homolog D5 (394 aa).

The 286-residue stretch at 62 to 347 (RPPIMPIGKG…VENALAHPYL (286 aa)) folds into the Protein kinase domain. Residues 68–76 (IGKGAYGIV) and Lys-91 contribute to the ATP site. The active-site Proton acceptor is the Asp-188. Residue Thr-220 is modified to Phosphothreonine. Residues 220–222 (TEY) carry the TXY motif. Position 222 is a phosphotyrosine (Tyr-222).

The protein belongs to the protein kinase superfamily. CMGC Ser/Thr protein kinase family. MAP kinase subfamily. It depends on Mg(2+) as a cofactor. Dually phosphorylated on Thr-220 and Tyr-222, which activates the enzyme. Leaves, roots, root apices, and dormant and growing axillary buds.

The catalysed reaction is L-seryl-[protein] + ATP = O-phospho-L-seryl-[protein] + ADP + H(+). The enzyme catalyses L-threonyl-[protein] + ATP = O-phospho-L-threonyl-[protein] + ADP + H(+). With respect to regulation, activated by tyrosine and threonine phosphorylation. The polypeptide is Mitogen-activated protein kinase homolog D5 (Pisum sativum (Garden pea)).